A 605-amino-acid chain; its full sequence is Progranulin (605 aa).

The N-terminal stretch at 1–17 (MWTLVGWTILVAGLVAG) is a signal peptide. Intrachain disulfides connect Cys126/Cys139 and Cys133/Cys149. Asn197 carries N-linked (GlcNAc...) asparagine glycosylation. 6 cysteine pairs are disulfide-bonded: Cys297/Cys309, Cys303/Cys319, Cys310/Cys327, Cys320/Cys334, Cys328/Cys341, and Cys335/Cys348. The disordered stretch occupies residues 359–386 (QKTPAQPSRPSQPSPPGPPGPPSPPGPL). Positions 368-385 (PSQPSPPGPPGPPSPPGP) are enriched in pro residues. 2 disulfide bridges follow: Cys392/Cys404 and Cys398/Cys414.

The protein belongs to the granulin family. As to quaternary structure, progranulin is secreted as a homodimer. Interacts with SLPI; interaction protects progranulin from proteolysis. Interacts (via region corresponding to granulin-7 peptide) with CTSD; stabilizes CTSD and increases its proteolytic activity. Interacts (via region corresponding to granulin-7 peptide) with SORT1; this interaction mediates endocytosis and lysosome delivery of progranulin; interaction occurs at the neuronal cell surface in a stressed nervous system. Interacts with PSAP; facilitates lysosomal delivery of progranulin from the extracellular space and the biosynthetic pathway. Forms a complex with PSAP and M6PR; PSAP bridges the binding between progranulin and M6PR. Forms a complex with PSAP and SORT1; progranulin bridges the interaction between PSAP and SORT1; facilitates lysosomal targeting of PSAP via SORT1; interaction enhances PSAP uptake in primary cortical neurons. Interacts (via regions corresponding to granulin-2 and granulin-7 peptides) with GBA1; this interaction prevents aggregation of GBA1-SCARB2 complex via interaction with HSPA1A upon stress. Interacts (via region corresponding to granulin-7 peptide) with HSPA1A; mediates recruitment of HSPA1A to GBA1 and prevents GBA1 aggregation in response to stress. In terms of processing, cleaved by ELANE; proteolysis is blocked by SLPI and is concentration- and time-dependent and induces CXCL8/IL-8 production; granulin-3 and granulin-4 are resistant to ELANE. Cleaved by CTSL in lysosome thus regulating the maturation and turnover of progranulin within the lysosome.

It is found in the secreted. Its subcellular location is the lysosome. Secreted protein that acts as a key regulator of lysosomal function and as a growth factor involved in inflammation, wound healing and cell proliferation. Regulates protein trafficking to lysosomes, and also the activity of lysosomal enzymes. Also facilitates the acidification of lysosomes, causing degradation of mature CTSD by CTSB. In addition, functions as a wound-related growth factor that acts directly on dermal fibroblasts and endothelial cells to promote division, migration and the formation of capillary-like tubule structures. Also promotes epithelial cell proliferation by blocking TNF-mediated neutrophil activation preventing release of oxidants and proteases. Moreover, modulates inflammation in neurons by preserving neurons survival, axonal outgrowth and neuronal integrity. In terms of biological role, inhibits epithelial cell proliferation and induces epithelial cells to secrete IL-8. Functionally, stabilizes CTSD through interaction with CTSD leading to maintain its aspartic-type peptidase activity. In Cavia porcellus (Guinea pig), this protein is Progranulin (GRN).